Reading from the N-terminus, the 68-residue chain is MSAKKSASKATVTVQQIGSPLRREPSQRQTLIGLGLNKMRRTKTLEDTPAVRGMINKVAHLVRVVDEA.

Positions 1-26 are disordered; sequence MSAKKSASKATVTVQQIGSPLRREPS. Polar residues predominate over residues 8–18; the sequence is SKATVTVQQIG.

It belongs to the universal ribosomal protein uL30 family. In terms of assembly, part of the 50S ribosomal subunit.

In Parvibaculum lavamentivorans (strain DS-1 / DSM 13023 / NCIMB 13966), this protein is Large ribosomal subunit protein uL30.